A 153-amino-acid chain; its full sequence is MSKAMPMAACAMAGVKQMQSLTLPWPSKDLSPNARVHWTRRSKAVKQARGYAEVMARRAGWSGLSLPVEGRLDLWISFYPPTRCLPDDDNMLARFKPYRDGIADALGIDDRRFVSHPLIEDEVRHAGQVVITITGITQQASNGGPRLHAHPAF.

It belongs to the RusA family.

This is an uncharacterized protein from Xylella fastidiosa (strain Temecula1 / ATCC 700964).